Here is a 604-residue protein sequence, read N- to C-terminus: Baculoviral IAP repeat-containing protein 3 (604 aa).

BIR repeat units follow at residues 29–96 (ELYR…CRFV), 169–235 (ENAR…CPFI), and 255–322 (HAAR…CEYL). Residues Cys-292, Cys-295, His-312, and Cys-319 each coordinate Zn(2+). Residues 439-529 (KESNDLLLIR…VLYEHLFVQQ (91 aa)) form the CARD domain. An RING-type zinc finger spans residues 557–592 (CKVCMDKEVSIVFIPCGHLVVCKDCAPSLRKCPICR).

Belongs to the IAP family. Interacts with PRSS25; interaction inhibits apoptotic suppressor activity. The BIR motifs region interacts with TNF receptor associated factors 1 and 2 (TRAF1 and TRAF2) to form a heteromeric complex, which is then recruited to the tumor necrosis factor receptor 2 (TNFR2). Interaction with TRAF2 is required for ubiquitination of IKBKE, degradation of NFKBIA and activation of NF-kappa-B. Interacts with RIP1, RIP2, RIP3, RIP4 and USP19. In terms of processing, auto-ubiquitinated and degraded by the proteasome in apoptotic cells. In terms of tissue distribution, highly expressed in fetal lung, and kidney. In the adult, expression is mainly seen in lymphoid tissues, including spleen, thymus and peripheral blood lymphocytes.

The protein localises to the cytoplasm. It localises to the nucleus. The catalysed reaction is S-ubiquitinyl-[E2 ubiquitin-conjugating enzyme]-L-cysteine + [acceptor protein]-L-lysine = [E2 ubiquitin-conjugating enzyme]-L-cysteine + N(6)-ubiquitinyl-[acceptor protein]-L-lysine.. With respect to regulation, USP19 regulates the stability of BIRC3/c-IAP2 by preventing its ubiquitination. Its function is as follows. Multi-functional protein which regulates not only caspases and apoptosis, but also modulates inflammatory signaling and immunity, mitogenic kinase signaling and cell proliferation, as well as cell invasion and metastasis. Acts as an E3 ubiquitin-protein ligase regulating NF-kappa-B signaling and regulates both canonical and non-canonical NF-kappa-B signaling by acting in opposite directions: acts as a positive regulator of the canonical pathway and suppresses constitutive activation of non-canonical NF-kappa-B signaling. The target proteins for its E3 ubiquitin-protein ligase activity include: RIPK1, RIPK2, RIPK3, RIPK4, CASP3, CASP7, CASP8, IKBKE, TRAF1, and BCL10. Acts as an important regulator of innate immune signaling via regulation of Toll-like receptors (TLRs), Nodlike receptors (NLRs) and RIG-I like receptors (RLRs), collectively referred to as pattern recognition receptors (PRRs). Protects cells from spontaneous formation of the ripoptosome, a large multi-protein complex that has the capability to kill cancer cells in a caspase-dependent and caspase-independent manner. Suppresses ripoptosome formation by ubiquitinating RIPK1 and CASP8. The sequence is that of Baculoviral IAP repeat-containing protein 3 (BIRC3) from Homo sapiens (Human).